The chain runs to 650 residues: MDLCQVFLTLALAVTSSTFSGSEATPATLGKASPVLQRINPSLGTSSSGKPRFTKCRSPELETFSCYWTEGDNPDLKTPGSIQLYYAKRESQRQAARIAHEWTQEWKECPDYVSAGKNSCYFNSSYTSIWIPYCIKLTTNGDLLDQKCFTVDEIVQPDPPIGLNWTLLNISLTGIRGDIQVSWQPPPNADVLKGWIILEYEIQYKEVNESKWKVMGPIWLTYCPVYSLRMDKEHEVRVRSRQRSFEKYSEFSEVLRVIFPQTNILEACEEDIQFPWFLIIIFGIFGVAVMLFVVIFSKQQRIKMLILPPVPVPKIKGIDPDLLKEGKLEEVNTILGIHDNYKPDFYNDDSWVEFIELDIDEADVDEKTEGSDTDRLLSNDHEKSAGILGAKDDDSGRTSCYDPDILDTDFHTSDMCDGTLKFRQSQKLNMEADLLCLDQKNLKNLPYDASLGSLHPSITQTVEENKPQPLLSSETEATHQLASTPMSNPTSLANIDFYAQVSDITPAGGDVLSPGQKIKAGIAQGNTQREVATPCQENYSMNSAYFCESDAKKCIAVARRMEATSCIKPSFNQEDIYITTESLTTTAQMSETADIAPDAEMSVPDYTTVHTVQSPRGLILNATALPLPDKKNFPSSCGYVSTDQLNKIMQ.

A signal peptide spans 1–24 (MDLCQVFLTLALAVTSSTFSGSEA). The Extracellular segment spans residues 25–273 (TPATLGKASP…ILEACEEDIQ (249 aa)). Intrachain disulfides connect Cys56–Cys66 and Cys109–Cys120. A glycan (N-linked (GlcNAc...) asparagine) is linked at Asn123. Cys134 and Cys148 are oxidised to a cystine. A Fibronectin type-III domain is found at 159 to 262 (PPIGLNWTLL…EVLRVIFPQT (104 aa)). N-linked (GlcNAc...) asparagine glycans are attached at residues Asn164, Asn169, and Asn208. The WSXWS motif signature appears at 248–252 (YSEFS). A helical membrane pass occupies residues 274-297 (FPWFLIIIFGIFGVAVMLFVVIFS). Residues 298–650 (KQQRIKMLIL…STDQLNKIMQ (353 aa)) are Cytoplasmic-facing. Residues 303 to 390 (KMLILPPVPV…HEKSAGILGA (88 aa)) are required for JAK2 binding. Residues 306–314 (ILPPVPVPK) carry the Box 1 motif motif. Residues 349 to 358 (DSWVEFIELD) carry the UbE motif motif. The residue at position 350 (Ser350) is a Phosphoserine. Residues 466-486 (KPQPLLSSETEATHQLASTPM) form a disordered region. Polar residues predominate over residues 470-486 (LLSSETEATHQLASTPM). Phosphotyrosine is present on residues Tyr498 and Tyr606.

Belongs to the type I cytokine receptor family. Type 1 subfamily. In terms of assembly, on growth hormone (GH) binding, forms homodimers and binds JAK2 via a box 1-containing domain. In terms of processing, the soluble form (GHBP) is produced by phorbol ester-promoted proteolytic cleavage at the cell surface (shedding) by ADAM17/TACE. Shedding is inhibited by growth hormone (GH) binding to the receptor probably due to a conformational change in GHR rendering the receptor inaccessible to ADAM17. Post-translationally, on GH binding, phosphorylated on tyrosine residues in the cytoplasmic domain by JAK2. Ubiquitinated by the ECS(SOCS2) complex following ligand-binding and phosphorylation by JAK2, leading to its degradation by the proteasome. Regulation by the ECS(SOCS2) complex acts as a negative feedback loop of growth hormone receptor signaling. Ubiquitination is not sufficient for GHR internalization. In terms of tissue distribution, expressed in all tissues tested including, liver, heart, adipose tissue, mammary gland, testes, ovary, brain, kidney and muscle. Highest levels in liver.

Its subcellular location is the cell membrane. The protein resides in the secreted. Its function is as follows. Receptor for pituitary gland growth hormone (GH1) involved in regulating postnatal body growth. On ligand binding, couples to the JAK2/STAT5 pathway. Functionally, the soluble form (GHBP) acts as a reservoir of growth hormone in plasma and may be a modulator/inhibitor of GH signaling. This Mus musculus (Mouse) protein is Growth hormone receptor (Ghr).